Consider the following 261-residue polypeptide: uncharacterized protein (261 aa).

5 helical membrane passes run 38–58 (FIYL…ITLL), 134–154 (YTLM…LALI), 163–183 (ILIN…TYVL), 195–215 (YMGL…LFFL), and 219–239 (HKSV…CLKV).

It is found in the membrane. This is an uncharacterized protein from Dictyostelium discoideum (Social amoeba).